A 105-amino-acid chain; its full sequence is Large ribosomal subunit protein uL18c (105 aa).

This sequence belongs to the universal ribosomal protein uL18 family. As to quaternary structure, part of the 50S ribosomal subunit; contacts the 5S rRNA.

It localises to the plastid. Its subcellular location is the chloroplast. In terms of biological role, binds 5S rRNA, forms part of the central protuberance of the 50S subunit. The polypeptide is Large ribosomal subunit protein uL18c (rpl18) (Gracilaria tenuistipitata var. liui (Red alga)).